A 29-amino-acid polypeptide reads, in one-letter code: Vodo peptide N (29 aa).

The cyclopeptide (Gly-Asn) cross-link spans 1–29 (GLPVCGETCTLGKCYTAGCSCSWPVCYRN). Intrachain disulfides connect Cys5/Cys19, Cys9/Cys21, and Cys14/Cys26.

This is a cyclic peptide.

In terms of biological role, probably participates in a plant defense mechanism. This is Vodo peptide N from Viola odorata (Sweet violet).